A 480-amino-acid chain; its full sequence is GTPase Der (480 aa).

2 consecutive EngA-type G domains span residues 5-170 and 178-351; these read PVVA…PSQE and LKLA…QSSM. GTP is bound by residues 11–18, 58–62, 123–126, 184–191, 231–235, and 296–299; these read GRPNVGKS, DTGGI, NKVD, DTAGV, and NKWD. The KH-like domain occupies 352–436; that stretch reads FEVSTNRLTQ…PLNVVFKLNE (85 aa). Over residues 438 to 454 the composition is skewed to polar residues; the sequence is PYANKSDTPTKAKTQQL. The tract at residues 438–480 is disordered; sequence PYANKSDTPTKAKTQQLRQRERNRAQKFTTKDKPRFTNKDKKR. The span at 455–480 shows a compositional bias: basic and acidic residues; sequence RQRERNRAQKFTTKDKPRFTNKDKKR.

Belongs to the TRAFAC class TrmE-Era-EngA-EngB-Septin-like GTPase superfamily. EngA (Der) GTPase family. As to quaternary structure, associates with the 50S ribosomal subunit.

GTPase that plays an essential role in the late steps of ribosome biogenesis. The polypeptide is GTPase Der (Psychrobacter cryohalolentis (strain ATCC BAA-1226 / DSM 17306 / VKM B-2378 / K5)).